The chain runs to 318 residues: Methionyl-tRNA formyltransferase (318 aa).

120-123 (SLLP) serves as a coordination point for (6S)-5,6,7,8-tetrahydrofolate.

The protein belongs to the Fmt family.

It catalyses the reaction L-methionyl-tRNA(fMet) + (6R)-10-formyltetrahydrofolate = N-formyl-L-methionyl-tRNA(fMet) + (6S)-5,6,7,8-tetrahydrofolate + H(+). Its function is as follows. Attaches a formyl group to the free amino group of methionyl-tRNA(fMet). The formyl group appears to play a dual role in the initiator identity of N-formylmethionyl-tRNA by promoting its recognition by IF2 and preventing the misappropriation of this tRNA by the elongation apparatus. The polypeptide is Methionyl-tRNA formyltransferase (Variovorax paradoxus (strain S110)).